The following is a 669-amino-acid chain: Dymeclin (669 aa).

Gly-2 carries the N-myristoyl glycine lipid modification.

The protein belongs to the dymeclin family. Myristoylated in vitro; myristoylation is not essential for protein targeting to Golgi compartment.

Its subcellular location is the cytoplasm. It localises to the golgi apparatus. Necessary for correct organization of Golgi apparatus. This Gallus gallus (Chicken) protein is Dymeclin (DYM).